The following is a 170-amino-acid chain: Cyclic pyranopterin monophosphate synthase (170 aa).

Residues 75 to 77 (MCH) and 115 to 116 (ME) each bind substrate. D130 is a catalytic residue.

Belongs to the MoaC family. In terms of assembly, homohexamer; trimer of dimers.

The enzyme catalyses (8S)-3',8-cyclo-7,8-dihydroguanosine 5'-triphosphate = cyclic pyranopterin phosphate + diphosphate. Its pathway is cofactor biosynthesis; molybdopterin biosynthesis. In terms of biological role, catalyzes the conversion of (8S)-3',8-cyclo-7,8-dihydroguanosine 5'-triphosphate to cyclic pyranopterin monophosphate (cPMP). The sequence is that of Cyclic pyranopterin monophosphate synthase from Bacillus velezensis (strain DSM 23117 / BGSC 10A6 / LMG 26770 / FZB42) (Bacillus amyloliquefaciens subsp. plantarum).